Consider the following 121-residue polypeptide: Phosphoribosyl-ATP pyrophosphatase (121 aa).

Belongs to the PRA-PH family.

The protein resides in the cytoplasm. It catalyses the reaction 1-(5-phospho-beta-D-ribosyl)-ATP + H2O = 1-(5-phospho-beta-D-ribosyl)-5'-AMP + diphosphate + H(+). It participates in amino-acid biosynthesis; L-histidine biosynthesis; L-histidine from 5-phospho-alpha-D-ribose 1-diphosphate: step 2/9. The sequence is that of Phosphoribosyl-ATP pyrophosphatase from Burkholderia ambifaria (strain MC40-6).